The chain runs to 211 residues: Redox-sensing transcriptional repressor Rex (211 aa).

The H-T-H motif DNA-binding region spans 18–57 (LYYRFLKNLHASGKQRVSSAELSEAVKVDSATIRRDFSYF). 92–97 (GVGNLG) serves as a coordination point for NAD(+).

Belongs to the transcriptional regulatory Rex family. Homodimer.

It is found in the cytoplasm. In terms of biological role, modulates transcription in response to changes in cellular NADH/NAD(+) redox state. The polypeptide is Redox-sensing transcriptional repressor Rex (Anoxybacillus flavithermus (strain DSM 21510 / WK1)).